Reading from the N-terminus, the 140-residue chain is uncharacterized protein (140 aa).

This sequence belongs to the MG439/MG440 family.

This is an uncharacterized protein from Mycoplasma pneumoniae (strain ATCC 29342 / M129 / Subtype 1) (Mycoplasmoides pneumoniae).